Reading from the N-terminus, the 456-residue chain is Phosphomannomutase (456 aa).

The Phosphoserine intermediate role is filled by serine 98. Positions 98, 246, 248, and 250 each coordinate Mg(2+).

This sequence belongs to the phosphohexose mutase family. Requires Mg(2+) as cofactor.

It carries out the reaction alpha-D-mannose 1-phosphate = D-mannose 6-phosphate. Its pathway is nucleotide-sugar biosynthesis; GDP-alpha-D-mannose biosynthesis; alpha-D-mannose 1-phosphate from D-fructose 6-phosphate: step 2/2. It functions in the pathway bacterial outer membrane biogenesis; LPS O-antigen biosynthesis. Its function is as follows. Involved in GDP-mannose biosynthesis which serves as the activated sugar nucleotide precursor for mannose residues in cell surface polysaccharides. This enzyme participates in synthesis of the LPS O9 antigen. This is Phosphomannomutase (manB) from Escherichia coli.